The primary structure comprises 109 residues: Latartoxin-2a (109 aa).

The first 19 residues, 1–19, serve as a signal peptide directing secretion; sequence MKVLVIIALCLVAFQSALS. Positions 20–37 are cleaved as a propeptide — removed in mature form; the sequence is KKIENFESYIEDLKSEAR. The Processing quadruplet motif motif lies at 34 to 37; that stretch reads SEAR. Intrachain disulfides connect cysteine 39–cysteine 56, cysteine 46–cysteine 67, cysteine 55–cysteine 81, cysteine 69–cysteine 79, and cysteine 72–cysteine 93. Valine 108 is subject to Valine amide.

Belongs to the neurotoxin 19 (CSTX) family. 11 (latartoxin) subfamily. Post-translationally, contains 5 disulfide bonds. In terms of processing, cleavage of the propeptide depends on the processing quadruplet motif (XXXR, with at least one of X being E). Expressed by the venom gland.

The protein localises to the secreted. Functionally, insect toxin. Causes paralysis in larvae of C.vicina by depolarizing membranes at the neuromuscular junction. The sequence is that of Latartoxin-2a from Lachesana tarabaevi (Spider).